Reading from the N-terminus, the 348-residue chain is Uroporphyrinogen decarboxylase (348 aa).

Substrate-binding positions include 24–28 (RQAGR), Asp73, Tyr150, Ser205, and His324.

It belongs to the uroporphyrinogen decarboxylase family. Homodimer.

The protein localises to the cytoplasm. It catalyses the reaction uroporphyrinogen III + 4 H(+) = coproporphyrinogen III + 4 CO2. Its pathway is porphyrin-containing compound metabolism; protoporphyrin-IX biosynthesis; coproporphyrinogen-III from 5-aminolevulinate: step 4/4. In terms of biological role, catalyzes the decarboxylation of four acetate groups of uroporphyrinogen-III to yield coproporphyrinogen-III. The polypeptide is Uroporphyrinogen decarboxylase (Roseiflexus sp. (strain RS-1)).